We begin with the raw amino-acid sequence, 416 residues long: Interleukin-1 receptor type 2 (416 aa).

Positions Met-1 to Ala-13 are cleaved as a signal peptide. The Extracellular segment spans residues Phe-14–Glu-355. 3 Ig-like C2-type domains span residues Pro-29–Lys-136, Pro-146–Thr-233, and Pro-249–Ser-357. Disulfide bonds link Cys-42–Cys-128, Cys-64–Cys-120, and Cys-164–Cys-219. 4 N-linked (GlcNAc...) asparagine glycosylation sites follow: Asn-124, Asn-208, Asn-231, and Asn-289. Residues Cys-270 and Cys-338 are joined by a disulfide bond. A helical membrane pass occupies residues Val-356–Ile-381. The Cytoplasmic segment spans residues Arg-382 to Lys-416. Residues Thr-396 to Lys-416 are disordered. A compositionally biased stretch (polar residues) spans Pro-399–Lys-416.

It belongs to the interleukin-1 receptor family. As to quaternary structure, associates with IL1RAP to form a non-signaling interleukin-1 receptor complex. Post-translationally, a soluble form (sIL1R2) can also be produced by proteolytic cleavage at the cell surface (shedding) involving a metalloproteinase.

It is found in the membrane. Its subcellular location is the cell membrane. It localises to the secreted. Functionally, non-signaling receptor for IL1A, IL1B and IL1RN. Reduces IL1B activities. Serves as a decoy receptor by competitive binding to IL1B and preventing its binding to IL1R1. Also modulates cellular response through non-signaling association with IL1RAP after binding to IL1B. IL1R2 (membrane and secreted forms) preferentially binds IL1B and poorly IL1A and IL1RN. The secreted IL1R2 recruits secreted IL1RAP with high affinity; this complex formation may be the dominant mechanism for neutralization of IL1B by secreted/soluble receptors. The polypeptide is Interleukin-1 receptor type 2 (Il1r2) (Rattus norvegicus (Rat)).